Consider the following 429-residue polypeptide: Ribosomal RNA small subunit methyltransferase B (429 aa).

Residues 254–260 (CAAPGGK), D277, D303, and D322 contribute to the S-adenosyl-L-methionine site. C375 serves as the catalytic Nucleophile.

Belongs to the class I-like SAM-binding methyltransferase superfamily. RsmB/NOP family.

It localises to the cytoplasm. It carries out the reaction cytidine(967) in 16S rRNA + S-adenosyl-L-methionine = 5-methylcytidine(967) in 16S rRNA + S-adenosyl-L-homocysteine + H(+). Its function is as follows. Specifically methylates the cytosine at position 967 (m5C967) of 16S rRNA. This is Ribosomal RNA small subunit methyltransferase B from Shigella flexneri.